A 351-amino-acid chain; its full sequence is MFVIEAVKSDVDANIQHKINQKTKPLGALGQLESLALQIARVQYRGDKQSLSTPLQITKPTMLVFAADHGIAAYGVSIAPSEVTTQMVHNFVQGGAAINVFCRQVGFELEIIDCGILQPLTGQANVIDQRLGAGTKAMHLAAAMPLEKVAQGFEFARQLVARHIDVGCNLIALGEMGIGNTSAATAVMSAMLNIDVEQCVGRGTGIDDATLVIKTKLINQALDLHQHELVSPEAILAHVGGFEIVQMTGAILAAAEQKILVVIDGFIATAAALVAVKLSPQSRDYLVFAHESQEQGHKLLLQQLQATPLLSLGLRLGEGTGAALALPLIQAAVNFYNQMASFDDAGVNNVV.

Residue glutamate 318 is the Proton acceptor of the active site.

This sequence belongs to the CobT family.

The catalysed reaction is 5,6-dimethylbenzimidazole + nicotinate beta-D-ribonucleotide = alpha-ribazole 5'-phosphate + nicotinate + H(+). It participates in nucleoside biosynthesis; alpha-ribazole biosynthesis; alpha-ribazole from 5,6-dimethylbenzimidazole: step 1/2. Functionally, catalyzes the synthesis of alpha-ribazole-5'-phosphate from nicotinate mononucleotide (NAMN) and 5,6-dimethylbenzimidazole (DMB). This chain is Nicotinate-nucleotide--dimethylbenzimidazole phosphoribosyltransferase, found in Shewanella frigidimarina (strain NCIMB 400).